Consider the following 614-residue polypeptide: Cathepsin F (614 aa).

An N-terminal signal peptide occupies residues 1–20; that stretch reads MRLFAAATVALVLLLGQAAG. A propeptide spans 21-393 (activation peptide); sequence EELAEERAGQ…AAVVPAYHGE (373 aa). The disordered stretch occupies residues 25 to 50; the sequence is EERAGQAQGDAESTESSETTTDQAVS. A compositionally biased stretch (low complexity) spans 29–45; sequence GQAQGDAESTESSETTT. N-linked (GlcNAc...) asparagine glycosylation is present at asparagine 151. 2 disulfides stabilise this stretch: cysteine 415–cysteine 456 and cysteine 449–cysteine 489. Cysteine 418 is an active-site residue. 2 N-linked (GlcNAc...) asparagine glycosylation sites follow: asparagine 492 and asparagine 510. Cysteine 548 and cysteine 602 are oxidised to a cystine. Catalysis depends on residues histidine 555 and asparagine 581.

The protein belongs to the peptidase C1 family.

The catalysed reaction is The recombinant enzyme cleaves synthetic substrates with Phe and Leu (better than Val) in P2, with high specificity constant (kcat/Km) comparable to that of cathepsin L.. Functionally, may have a role in autophagic cell death. This Drosophila melanogaster (Fruit fly) protein is Cathepsin F.